Consider the following 124-residue polypeptide: U12-barytoxin-Tl1a (124 aa).

An N-terminal signal peptide occupies residues 1 to 20 (MKTMIAWLVLLTFAAALCFA). Residues 21 to 78 (DEGLKQEHMNERKKSRFREDIPDEISEDLLLQEMEAMEAELLEKEMRMEENRNSREKR) constitute a propeptide that is removed on maturation. Cystine bridges form between Cys-79–Cys-99, Cys-86–Cys-104, and Cys-98–Cys-118.

This sequence belongs to the neurotoxin 14 (magi-1) family. 04 (ICK-6) subfamily. As to expression, expressed by the venom gland.

The protein resides in the secreted. Ion channel inhibitor. The protein is U12-barytoxin-Tl1a of Trittame loki (Brush-footed trapdoor spider).